The sequence spans 259 residues: Cell division protein FtsQ (259 aa).

Residues 1-15 (MTRDQTATFGRHALR) lie on the Cytoplasmic side of the membrane. The helical transmembrane segment at 16–36 (VAGSGLLVAGVVALGLLGWQW) threads the bilayer. At 37–259 (RANVTVDRVA…VVTRTRPLDG (223 aa)) the chain is on the periplasmic side. The POTRA domain occupies 40–109 (VTVDRVAVTG…GALTISVTER (70 aa)).

The protein belongs to the FtsQ/DivIB family. FtsQ subfamily.

It localises to the cell inner membrane. In terms of biological role, essential cell division protein. The sequence is that of Cell division protein FtsQ from Salinibacter ruber (strain DSM 13855 / M31).